Reading from the N-terminus, the 125-residue chain is Large ribosomal subunit protein bL12 (125 aa).

Belongs to the bacterial ribosomal protein bL12 family. As to quaternary structure, homodimer. Part of the ribosomal stalk of the 50S ribosomal subunit. Forms a multimeric L10(L12)X complex, where L10 forms an elongated spine to which 2 to 4 L12 dimers bind in a sequential fashion. Binds GTP-bound translation factors.

Its function is as follows. Forms part of the ribosomal stalk which helps the ribosome interact with GTP-bound translation factors. Is thus essential for accurate translation. The chain is Large ribosomal subunit protein bL12 from Campylobacter concisus (strain 13826).